The primary structure comprises 97 residues: YcgL domain-containing protein PFLU_1517 (97 aa).

Positions 3–87 (RICSIYRSKK…AEDEYIEHLP (85 aa)) constitute a YcgL domain.

This Pseudomonas fluorescens (strain SBW25) protein is YcgL domain-containing protein PFLU_1517.